The primary structure comprises 99 residues: A-type ATP synthase subunit F (99 aa).

This sequence belongs to the V-ATPase F subunit family. As to quaternary structure, has multiple subunits with at least A(3), B(3), C, D, E, F, H, I and proteolipid K(x).

It localises to the cell membrane. Functionally, component of the A-type ATP synthase that produces ATP from ADP in the presence of a proton gradient across the membrane. The polypeptide is A-type ATP synthase subunit F (Methanocella arvoryzae (strain DSM 22066 / NBRC 105507 / MRE50)).